The chain runs to 72 residues: MLVITRKKGESLLIGDDIEITVVKLDDGSVKLAIDAPKKLTILRKELYNEVQEENKKATNFNPSILKNIKSK.

It belongs to the CsrA/RsmA family. Homodimer; the beta-strands of each monomer intercalate to form a hydrophobic core, while the alpha-helices form wings that extend away from the core.

The protein resides in the cytoplasm. Its function is as follows. A translational regulator that binds mRNA to regulate translation initiation and/or mRNA stability. Usually binds in the 5'-UTR at or near the Shine-Dalgarno sequence preventing ribosome-binding, thus repressing translation. Its main target seems to be the major flagellin gene, while its function is anatagonized by FliW. The polypeptide is Translational regulator CsrA (Clostridium botulinum (strain 657 / Type Ba4)).